Reading from the N-terminus, the 486-residue chain is ATP synthase subunit beta (486 aa).

167 to 174 (GGAGVGKT) is a binding site for ATP.

The protein belongs to the ATPase alpha/beta chains family. F-type ATPases have 2 components, CF(1) - the catalytic core - and CF(0) - the membrane proton channel. CF(1) has five subunits: alpha(3), beta(3), gamma(1), delta(1), epsilon(1). CF(0) has three main subunits: a(1), b(2) and c(9-12). The alpha and beta chains form an alternating ring which encloses part of the gamma chain. CF(1) is attached to CF(0) by a central stalk formed by the gamma and epsilon chains, while a peripheral stalk is formed by the delta and b chains.

The protein resides in the cell inner membrane. It carries out the reaction ATP + H2O + 4 H(+)(in) = ADP + phosphate + 5 H(+)(out). In terms of biological role, produces ATP from ADP in the presence of a proton gradient across the membrane. The catalytic sites are hosted primarily by the beta subunits. The chain is ATP synthase subunit beta from Anaplasma marginale (strain St. Maries).